We begin with the raw amino-acid sequence, 329 residues long: G-protein coupled receptor 3 (329 aa).

Residues 1–43 (MMWGAGRSMAWFSAGSGSVNVSIDPAEEPTGPATLLPSPRAWD) are Extracellular-facing. Asparagine 20 carries N-linked (GlcNAc...) asparagine glycosylation. A helical membrane pass occupies residues 44-64 (VVLCISGTLVSCENALVVAII). Residues 65 to 73 (VGTPAFRAP) are Cytoplasmic-facing. Residues 74–94 (MFLLVGSLAVADLLAGLGLVL) traverse the membrane as a helical segment. The Extracellular portion of the chain corresponds to 95 to 108 (HFAADFCIGSPEMS). Residues 109 to 129 (LVLVGVLATAFTASIGSLLAI) form a helical membrane-spanning segment. Residues 130-153 (TVDRYLSLYNALTYYSETTVTRTY) lie on the Cytoplasmic side of the membrane. A helical transmembrane segment spans residues 154-174 (VMLALVWVGALGLGLVPVLAW). The Extracellular segment spans residues 175 to 192 (NCRDGLTTCGVVYPLSKN). The chain crosses the membrane as a helical span at residues 193-213 (HLVVLAIVFFMVFGIMLQLYA). Over 214-247 (QICRIVCRHAQQIALQRHLLPASHYVATRKGIAT) the chain is Cytoplasmic. Residues 248 to 268 (LAVVLGAFAACWLPFTVYCLL) form a helical membrane-spanning segment. Residues 269 to 277 (GDANSPPLY) lie on the Extracellular side of the membrane. A helical membrane pass occupies residues 278–298 (TYLTLLPATYNSMINPVIYAF). The Cytoplasmic segment spans residues 299-329 (RNQDVQKVLWAICCCCSTSKIPFRSRSPSDV). The S-palmitoyl cysteine moiety is linked to residue cysteine 312. Serine 323, serine 325, and serine 327 each carry phosphoserine.

It belongs to the G-protein coupled receptor 1 family. In terms of tissue distribution, abundantly expressed in granule neurons at all development stages. Enriched in the longest tips of neurites during differentiation of hippocampal neurons.

It localises to the cell membrane. Functionally, constitutively active G-protein coupled receptor that maintains high 3'-5'-cyclic adenosine monophosphate (cAMP) levels that a plays a role in serveral processes including meiotic arrest in oocytes or neuronal development via activation of numerous intracellular signaling pathways. Acts as an essential activator of thermogenic adipocytes and drives thermogenesis via its intrinsic G(s)-coupling activity without the requirement of a ligand. Has a potential role in modulating a number of brain functions, including behavioral responses to stress, amyloid-beta peptide generation in neurons. Stimulates neurite outgrowth in cerebellar granular neurons modulated via PKA, ERK, and most strongly PI3K-mediated signaling pathways. The sequence is that of G-protein coupled receptor 3 (Gpr3) from Rattus norvegicus (Rat).